The following is a 49-amino-acid chain: Sperm protamine P1 (49 aa).

Belongs to the protamine P1 family. As to expression, testis.

It localises to the nucleus. Its subcellular location is the chromosome. In terms of biological role, protamines substitute for histones in the chromatin of sperm during the haploid phase of spermatogenesis. They compact sperm DNA into a highly condensed, stable and inactive complex. This Rhinopoma hardwickii (Lesser mouse-tailed bat) protein is Sperm protamine P1 (PRM1).